The primary structure comprises 311 residues: tRNA-cytidine(32) 2-sulfurtransferase (311 aa).

Residues 47-52 (SGGKDS) carry the PP-loop motif motif. The [4Fe-4S] cluster site is built by cysteine 122, cysteine 125, and cysteine 213.

Belongs to the TtcA family. In terms of assembly, homodimer. Requires Mg(2+) as cofactor. The cofactor is [4Fe-4S] cluster.

It localises to the cytoplasm. The catalysed reaction is cytidine(32) in tRNA + S-sulfanyl-L-cysteinyl-[cysteine desulfurase] + AH2 + ATP = 2-thiocytidine(32) in tRNA + L-cysteinyl-[cysteine desulfurase] + A + AMP + diphosphate + H(+). It functions in the pathway tRNA modification. Its function is as follows. Catalyzes the ATP-dependent 2-thiolation of cytidine in position 32 of tRNA, to form 2-thiocytidine (s(2)C32). The sulfur atoms are provided by the cysteine/cysteine desulfurase (IscS) system. The polypeptide is tRNA-cytidine(32) 2-sulfurtransferase (Shigella flexneri serotype 5b (strain 8401)).